The primary structure comprises 833 residues: Copper-exporting P-type ATPase (833 aa).

HMA domains follow at residues 3–64 and 98–161; these read QTID…YGAT and ESQQ…YGAE. Cu(+) contacts are provided by Cys-14, Cys-17, Cys-109, and Cys-112. The next 6 membrane-spanning stretches (helical) occupy residues 186–206, 217–237, 253–273, 283–303, 437–457, and 463–483; these read WQAI…MIGD, LWLA…GHFY, TLVA…NLWP, LYYE…MLEA, AVFV…WYFF, and IVYT…CALG. Asp-522 serves as the catalytic 4-aspartylphosphate intermediate. Asp-719 and Asp-723 together coordinate Mg(2+). A run of 2 helical transmembrane segments spans residues 778–798 and 800–820; these read LGAF…LWPF and GTLL…ITVV.

The protein belongs to the cation transport ATPase (P-type) (TC 3.A.3) family. Type IB subfamily.

Its subcellular location is the cell inner membrane. The protein localises to the cytoplasm. The catalysed reaction is Cu(+)(in) + ATP + H2O = Cu(+)(out) + ADP + phosphate + H(+). Involved in Cu(+) export. Essential for copper tolerance under both aerobic and anaerobic conditions. Its function is as follows. Probably also encodes a cytoplasmic copper chaperone CopA(Z) that is produced by programmed ribosomal frameshifting. This is Copper-exporting P-type ATPase (copA) from Salmonella typhimurium (strain LT2 / SGSC1412 / ATCC 700720).